The primary structure comprises 300 residues: Mitochondrial GTP/GDP carrier protein 1 (300 aa).

3 Solcar repeats span residues 8 to 108 (QSGL…KKDF), 117 to 198 (GKAM…AKEY), and 208 to 293 (ATWS…LIPR). A run of 6 helical transmembrane segments spans residues 14–34 (LLGS…VDTI), 85–101 (QRVY…EFLN), 122–142 (SAAA…LDVL), 173–189 (GWGW…FALF), 214–234 (FISS…LDVI), and 268–285 (GLTP…FSFA).

The protein belongs to the mitochondrial carrier (TC 2.A.29) family.

Its subcellular location is the mitochondrion inner membrane. Mitochondrial GTP/GDP transporter required for GTP uptake and GDP exit from mitochondria. Involved in mitochondrial iron transport and essential for mitochondrial genome maintenance. In Saccharomyces cerevisiae (strain ATCC 204508 / S288c) (Baker's yeast), this protein is Mitochondrial GTP/GDP carrier protein 1 (GGC1).